A 196-amino-acid polypeptide reads, in one-letter code: Interleukin-23 subunit alpha (196 aa).

The signal sequence occupies residues methionine 1 to alanine 21.

This sequence belongs to the IL-6 superfamily. In terms of assembly, heterodimer with IL12B; disulfide-linked. The heterodimer is known as interleukin IL-23. Interacts with IL23R; this interaction enables recruitment of IL12RB1. As to expression, secreted by activated dendritic cells (at protein level). Detected in various tissues with higher expression in polarized Th1 cells and activated macrophages.

The protein resides in the secreted. Associates with IL12B to form the IL-23 interleukin, a heterodimeric cytokine which functions in innate and adaptive immunity. IL-23 may constitute with IL-17 an acute response to infection in peripheral tissues. IL-23 binds to a heterodimeric receptor complex composed of IL12RB1 and IL23R, activates the Jak-Stat signaling cascade, stimulates memory rather than naive T-cells and promotes production of pro-inflammatory cytokines. IL-23 induces autoimmune inflammation and thus may be responsible for autoimmune inflammatory diseases and may be important for tumorigenesis. Functionally, associates with IL12B to form the pro-inflammatory cytokine IL-23 that plays different roles in innate and adaptive immunity. Released by antigen-presenting cells such as dendritic cells or macrophages, binds to a heterodimeric receptor complex composed of IL12RB1 and IL23R to activate JAK2 and TYK2 which then phosphorylate the receptor to form a docking site leading to the phosphorylation of STAT3 and STAT4. This process leads to activation of several pathways including p38 MAPK or NF-kappa-B and promotes the production of pro-inflammatory cytokines such as interleukin-17A/IL17A. In turn, participates in the early and effective intracellular bacterial clearance. Promotes the expansion and survival of T-helper 17 cells, a CD4-positive helper T-cell subset that produces IL-17, as well as other IL-17-producing cells. The sequence is that of Interleukin-23 subunit alpha (Il23a) from Mus musculus (Mouse).